The chain runs to 168 residues: MRTQSLKPYNANYHSLITRDAQERVDAPTDSGLISELVYSENQPAVAQLLLPLLQQLGKQSRWLLWLTPQQKLSRLWLQQSGLPMSKVVQARQINPLSTVDAMEKALLTGNYSVVLGWLPELSENDRIRLRMAAKLGNAYGFVMRPLNETKLDQGQCATLKIHSSLYH.

Residues 106–112 (ALLTGNY) form a ftsZ binding region. Residues 161–168 (KIHSSLYH) form a lon protease binding region.

The protein belongs to the SulA family. In terms of assembly, interacts with FtsZ. Post-translationally, is rapidly cleaved and degraded by the Lon protease once DNA damage is repaired.

In terms of biological role, component of the SOS system and an inhibitor of cell division. Accumulation of SulA causes rapid cessation of cell division and the appearance of long, non-septate filaments. In the presence of GTP, binds a polymerization-competent form of FtsZ in a 1:1 ratio, thus inhibiting FtsZ polymerization and therefore preventing it from participating in the assembly of the Z ring. This mechanism prevents the premature segregation of damaged DNA to daughter cells during cell division. The chain is Cell division inhibitor SulA from Yersinia enterocolitica serotype O:8 / biotype 1B (strain NCTC 13174 / 8081).